A 226-amino-acid polypeptide reads, in one-letter code: Lipoprotein-releasing system ATP-binding protein LolD (226 aa).

The region spanning 5–226 is the ABC transporter domain; sequence LKATNINKIY…LLRNGHWENY (222 aa). 41–48 provides a ligand contact to ATP; sequence GTSGSGKS.

This sequence belongs to the ABC transporter superfamily. Lipoprotein translocase (TC 3.A.1.125) family. The complex is composed of two ATP-binding proteins (LolD) and two transmembrane proteins (LolC and LolE).

The protein localises to the cell inner membrane. Its function is as follows. Part of the ABC transporter complex LolCDE involved in the translocation of mature outer membrane-directed lipoproteins, from the inner membrane to the periplasmic chaperone, LolA. Responsible for the formation of the LolA-lipoprotein complex in an ATP-dependent manner. The protein is Lipoprotein-releasing system ATP-binding protein LolD of Psychrobacter cryohalolentis (strain ATCC BAA-1226 / DSM 17306 / VKM B-2378 / K5).